The sequence spans 349 residues: 4-hydroxythreonine-4-phosphate dehydrogenase (349 aa).

Residues histidine 141 and threonine 142 each contribute to the substrate site. 3 residues coordinate a divalent metal cation: histidine 176, histidine 221, and histidine 276. Residues lysine 284, asparagine 293, and arginine 302 each coordinate substrate.

The protein belongs to the PdxA family. In terms of assembly, homodimer. The cofactor is Zn(2+). Mg(2+) serves as cofactor. Co(2+) is required as a cofactor.

It localises to the cytoplasm. The catalysed reaction is 4-(phosphooxy)-L-threonine + NAD(+) = 3-amino-2-oxopropyl phosphate + CO2 + NADH. Its pathway is cofactor biosynthesis; pyridoxine 5'-phosphate biosynthesis; pyridoxine 5'-phosphate from D-erythrose 4-phosphate: step 4/5. In terms of biological role, catalyzes the NAD(P)-dependent oxidation of 4-(phosphooxy)-L-threonine (HTP) into 2-amino-3-oxo-4-(phosphooxy)butyric acid which spontaneously decarboxylates to form 3-amino-2-oxopropyl phosphate (AHAP). The sequence is that of 4-hydroxythreonine-4-phosphate dehydrogenase from Methylorubrum populi (strain ATCC BAA-705 / NCIMB 13946 / BJ001) (Methylobacterium populi).